The chain runs to 282 residues: MKTFLILALLAIVATTATSAVRVPVPQLQPQNPSQQQPQEQVPLMQQQQQFPGQQEQFPPQQPYPHQQPFPSQQPYPQPQPFPPQLPYPQTQPFPPQQPYPQPQPQYPQPQQPISQQQAQQQQQQQQTLQQILQQQLIPCRDVVLQQHNIAHASSQVLQQSSYQQLQQLCCQQLFQIPEQSRCQAIHNVVHAIILHHHQQQQQQPSSQVSYQQPQEQYPSGQVSFQSSQQNPQAQGSVQPQQLPQFQEIRNLALQTLPAMCNVYIPPYCSTTIAPFGIFGTN.

A signal peptide spans 1–20; it reads MKTFLILALLAIVATTATSA. The segment covering 27–59 has biased composition (low complexity); that stretch reads QLQPQNPSQQQPQEQVPLMQQQQQFPGQQEQFP. Disordered regions lie at residues 27 to 122 and 220 to 240; these read QLQP…AQQQ and SGQV…SVQP. A compositionally biased stretch (pro residues) spans 60–111; the sequence is PQQPYPHQQPFPSQQPYPQPQPFPPQLPYPQTQPFPPQQPYPQPQPQYPQPQ. Residues 112–122 are compositionally biased toward low complexity; it reads QPISQQQAQQQ. The segment covering 224–240 has biased composition (polar residues); that stretch reads SFQSSQQNPQAQGSVQP.

Belongs to the gliadin/glutenin family. Post-translationally, substrate of transglutaminase.

In terms of biological role, gliadin is the major seed storage protein in wheat. This Triticum aestivum (Wheat) protein is Alpha/beta-gliadin A-III.